We begin with the raw amino-acid sequence, 214 residues long: Pyridoxine/pyridoxamine 5'-phosphate oxidase (214 aa).

Substrate-binding positions include 9-12 and Lys67; that span reads RREY. FMN-binding positions include 62 to 67, 77 to 78, Arg83, Lys84, and Gln106; these read RTVLLK and YS. Residues Tyr124, Arg128, and Ser132 each contribute to the substrate site. FMN is bound by residues 141-142 and Trp186; that span reads QS. 192-194 serves as a coordination point for substrate; the sequence is RLH. Arg196 contacts FMN.

Belongs to the pyridoxamine 5'-phosphate oxidase family. Homodimer. It depends on FMN as a cofactor.

The catalysed reaction is pyridoxamine 5'-phosphate + O2 + H2O = pyridoxal 5'-phosphate + H2O2 + NH4(+). It catalyses the reaction pyridoxine 5'-phosphate + O2 = pyridoxal 5'-phosphate + H2O2. It functions in the pathway cofactor metabolism; pyridoxal 5'-phosphate salvage; pyridoxal 5'-phosphate from pyridoxamine 5'-phosphate: step 1/1. Its pathway is cofactor metabolism; pyridoxal 5'-phosphate salvage; pyridoxal 5'-phosphate from pyridoxine 5'-phosphate: step 1/1. Its function is as follows. Catalyzes the oxidation of either pyridoxine 5'-phosphate (PNP) or pyridoxamine 5'-phosphate (PMP) into pyridoxal 5'-phosphate (PLP). In Porphyromonas gingivalis (strain ATCC BAA-308 / W83), this protein is Pyridoxine/pyridoxamine 5'-phosphate oxidase.